A 61-amino-acid chain; its full sequence is MASATIKVTQTRSTIGILEKHKATMRGLGLRRIGHTVELEDTPAVRGMVNKVNYLVRVEGE.

This sequence belongs to the universal ribosomal protein uL30 family. Part of the 50S ribosomal subunit.

The polypeptide is Large ribosomal subunit protein uL30 (Chromohalobacter salexigens (strain ATCC BAA-138 / DSM 3043 / CIP 106854 / NCIMB 13768 / 1H11)).